Here is a 200-residue protein sequence, read N- to C-terminus: GTP cyclohydrolase-2 (200 aa).

50-54 (RVHSE) lines the GTP pocket. The Zn(2+) site is built by Cys-55, Cys-66, and Cys-68. GTP is bound by residues Gln-71, 93 to 95 (EGR), and Thr-115. Asp-127 acts as the Proton acceptor in catalysis. The active-site Nucleophile is Arg-129. The GTP site is built by Thr-150 and Lys-155.

It belongs to the GTP cyclohydrolase II family. Zn(2+) is required as a cofactor.

It carries out the reaction GTP + 4 H2O = 2,5-diamino-6-hydroxy-4-(5-phosphoribosylamino)-pyrimidine + formate + 2 phosphate + 3 H(+). Its pathway is cofactor biosynthesis; riboflavin biosynthesis; 5-amino-6-(D-ribitylamino)uracil from GTP: step 1/4. Catalyzes the conversion of GTP to 2,5-diamino-6-ribosylamino-4(3H)-pyrimidinone 5'-phosphate (DARP), formate and pyrophosphate. The chain is GTP cyclohydrolase-2 from Acinetobacter baumannii (strain AB307-0294).